The following is a 292-amino-acid chain: Acetylglutamate kinase (292 aa).

Residues 62–63 (GG), Arg84, and Asn188 contribute to the substrate site.

This sequence belongs to the acetylglutamate kinase family. ArgB subfamily.

It is found in the cytoplasm. It carries out the reaction N-acetyl-L-glutamate + ATP = N-acetyl-L-glutamyl 5-phosphate + ADP. Its pathway is amino-acid biosynthesis; L-arginine biosynthesis; N(2)-acetyl-L-ornithine from L-glutamate: step 2/4. Catalyzes the ATP-dependent phosphorylation of N-acetyl-L-glutamate. The polypeptide is Acetylglutamate kinase (Methanosarcina mazei (strain ATCC BAA-159 / DSM 3647 / Goe1 / Go1 / JCM 11833 / OCM 88) (Methanosarcina frisia)).